Consider the following 182-residue polypeptide: Probable pyruvoyl-dependent arginine decarboxylase (182 aa).

Residue serine 43 is modified to Pyruvic acid (Ser).

The protein belongs to the PdaD family. Requires pyruvate as cofactor.

It carries out the reaction L-arginine + H(+) = agmatine + CO2. The chain is Probable pyruvoyl-dependent arginine decarboxylase from Chloroherpeton thalassium (strain ATCC 35110 / GB-78).